Consider the following 265-residue polypeptide: Tryptophan synthase alpha chain (265 aa).

Active-site proton acceptor residues include Glu41 and Asp52.

Belongs to the TrpA family. As to quaternary structure, tetramer of two alpha and two beta chains.

It catalyses the reaction (1S,2R)-1-C-(indol-3-yl)glycerol 3-phosphate + L-serine = D-glyceraldehyde 3-phosphate + L-tryptophan + H2O. Its pathway is amino-acid biosynthesis; L-tryptophan biosynthesis; L-tryptophan from chorismate: step 5/5. The alpha subunit is responsible for the aldol cleavage of indoleglycerol phosphate to indole and glyceraldehyde 3-phosphate. The chain is Tryptophan synthase alpha chain from Bacillus velezensis (strain DSM 23117 / BGSC 10A6 / LMG 26770 / FZB42) (Bacillus amyloliquefaciens subsp. plantarum).